The sequence spans 561 residues: Putative transport protein ASA_2308 (561 aa).

A run of 5 helical transmembrane segments spans residues 8–28, 37–57, 66–86, 90–110, and 161–181; these read LLHQSDSLLLFVVLAFGLLLG, IGNTIGVLFTALLFGQMGFEF, FMLFIFCVGIEAGPHFFSVFL, IHYITLTLVILLTALLLTVGL, and NMGIGYALTYLVGLVGLMLVV. 2 consecutive RCK C-terminal domains span residues 206–291 and 293–376; these read SDNE…NYRN and KEVF…KIGF. Transmembrane regions (helical) follow at residues 386–406, 409–429, 450–470, 476–496, and 541–561; these read LVAFTTFFVLGLLIGSVSLVF, LEFGLGNAVGLLLAGILMGYL, LGLAVFMVSTGLKAGGGILDH, AVVLFSGMLVTTLPVLVGYLF, and TYAVANVMLTLAGSFIIGFWF.

It belongs to the AAE transporter (TC 2.A.81) family. YbjL subfamily.

The protein resides in the cell membrane. The chain is Putative transport protein ASA_2308 from Aeromonas salmonicida (strain A449).